The chain runs to 355 residues: D-alanine--D-alanine ligase (355 aa).

The region spanning 143–350 (KIIFSNLKIP…IEQLVAKLVD (208 aa)) is the ATP-grasp domain. 178 to 233 (LKKLNFPVFVKPSNSGSSLGISKVINKSEIIPALEKARGIDPSILIEEGLEVREIE) contacts ATP. 3 residues coordinate Mg(2+): Asp303, Glu317, and Asn319.

This sequence belongs to the D-alanine--D-alanine ligase family. Mg(2+) is required as a cofactor. Mn(2+) serves as cofactor.

It localises to the cytoplasm. The enzyme catalyses 2 D-alanine + ATP = D-alanyl-D-alanine + ADP + phosphate + H(+). It participates in cell wall biogenesis; peptidoglycan biosynthesis. Cell wall formation. The protein is D-alanine--D-alanine ligase of Prochlorococcus marinus (strain AS9601).